The chain runs to 468 residues: Glutamate--tRNA ligase (468 aa).

5-7 (RIA) is an L-glutamate binding site. A 'HIGH' region motif is present at residues 8-18 (PSPTGDPHVGT). His-15 serves as a coordination point for ATP. L-glutamate contacts are provided by residues Glu-41, 187–191 (YHLAN), and Arg-205. Residues Glu-208, Leu-236, 243 to 247 (KISKR), and Lys-246 contribute to the ATP site. Positions 243–247 (KISKR) match the 'KMSKS' region motif. The interval 432-447 (QPLRAALTGSLETPGL) is interaction with tRNA.

This sequence belongs to the class-I aminoacyl-tRNA synthetase family. Glutamate--tRNA ligase type 1 subfamily. In terms of assembly, monomer.

It localises to the cytoplasm. It catalyses the reaction tRNA(Glu) + L-glutamate + ATP = L-glutamyl-tRNA(Glu) + AMP + diphosphate. Its activity is regulated as follows. In the absence of bound tRNA, ATP is bound in a non-productive mode, and the enzyme cannot activate amino acids. Functionally, catalyzes the attachment of glutamate to tRNA(Glu) in a two-step reaction: glutamate is first activated by ATP to form Glu-AMP and then transferred to the acceptor end of tRNA(Glu). This chain is Glutamate--tRNA ligase, found in Thermus thermophilus (strain ATCC 27634 / DSM 579 / HB8).